The primary structure comprises 489 residues: Serine/arginine-rich splicing factor 4 (489 aa).

The 71-residue stretch at 2 to 72 (PRVYIGRLSY…ERVIVEHARG (71 aa)) folds into the RRM 1 domain. Disordered stretches follow at residues 72 to 95 (GPRR…GRDK) and 169 to 489 (KIRL…HSRS). A phosphoserine mark is found at Ser78 and Ser84. Positions 104 to 177 (YRLIVENLSS…RKIRLVEDKP (74 aa)) constitute an RRM 2 domain. Basic residues-rich tracts occupy residues 179–206 (SRRR…KSRS) and 214–246 (SHSK…KKEK). Over residues 247–279 (SRSPSKDNKSRSRSRSPDKSRSKSKDHAEDKLQ) the composition is skewed to basic and acidic residues. Ser289, Ser291, and Ser293 each carry phosphoserine. Over residues 293-332 (SRHDSKSRSRSQERRAEEERRRSVSRARSQEKSRSQEKSL) the composition is skewed to basic and acidic residues. Positions 333-356 (LKSRSRSRSRSRSRSKDKRKGRKR) are enriched in basic residues. 2 stretches are compositionally biased toward basic and acidic residues: residues 357 to 370 (SRDE…SKSE) and 394 to 426 (KDTD…RAEG). Phosphoserine is present on residues Ser441, Ser453, and Ser455. 2 stretches are compositionally biased toward basic residues: residues 456-469 (RSKS…RSKS) and 479-489 (SRSRSRSHSRS).

This sequence belongs to the splicing factor SR family. As to quaternary structure, found in a pre-mRNA splicing complex with SRSF4/SFRS4, SRSF5/SFRS5, SNRNP70, SNRPA1, SRRM1 and SRRM2. Interacts with PNN. Post-translationally, extensively phosphorylated on serine residues in the RS domain.

The protein localises to the nucleus speckle. In terms of biological role, plays a role in alternative splice site selection during pre-mRNA splicing. Represses the splicing of MAPT/Tau exon 10. The protein is Serine/arginine-rich splicing factor 4 (Srsf4) of Mus musculus (Mouse).